We begin with the raw amino-acid sequence, 346 residues long: UDP-3-O-acylglucosamine N-acyltransferase (346 aa).

His253 functions as the Proton acceptor in the catalytic mechanism.

Belongs to the transferase hexapeptide repeat family. LpxD subfamily. In terms of assembly, homotrimer.

The enzyme catalyses a UDP-3-O-[(3R)-3-hydroxyacyl]-alpha-D-glucosamine + a (3R)-hydroxyacyl-[ACP] = a UDP-2-N,3-O-bis[(3R)-3-hydroxyacyl]-alpha-D-glucosamine + holo-[ACP] + H(+). Its pathway is bacterial outer membrane biogenesis; LPS lipid A biosynthesis. Catalyzes the N-acylation of UDP-3-O-acylglucosamine using 3-hydroxyacyl-ACP as the acyl donor. Is involved in the biosynthesis of lipid A, a phosphorylated glycolipid that anchors the lipopolysaccharide to the outer membrane of the cell. The protein is UDP-3-O-acylglucosamine N-acyltransferase of Rickettsia typhi (strain ATCC VR-144 / Wilmington).